The primary structure comprises 148 residues: MKVILLKDVPGQGKKGEVVDVAEGYARNYLFPRGLAEEATKGRMKALGDRQKVLAMKEKKAEEEARALAARLKGVTVVVRAKTGEGGRLFGSVNNKDIAEALASQYNIVLDKKKLLLKEPIKQLGMYSVAARLHPNIQAEVRVEVAGE.

It belongs to the bacterial ribosomal protein bL9 family.

In terms of biological role, binds to the 23S rRNA. The sequence is that of Large ribosomal subunit protein bL9 from Pelotomaculum thermopropionicum (strain DSM 13744 / JCM 10971 / SI).